The following is a 358-amino-acid chain: WD repeat domain phosphoinositide-interacting protein 4 (358 aa).

2 WD repeats span residues 2–40 (AQQRGVNSLQFNQDQSCFCCAMETGVRIYNVEPLMEKGH) and 188–228 (AHQS…KLVE). The L/FRRG motif motif lies at 229–232 (LRRG). The WD 3 repeat unit spans residues 233–272 (TDPATLYCINFSHDSSFLCASSDKGTVHIFALKDTKLNRR).

It belongs to the WD repeat PROPPIN family.

It localises to the preautophagosomal structure. Its function is as follows. Component of the autophagy machinery that controls the major intracellular degradation process by which cytoplasmic materials are packaged into autophagosomes and delivered to lysosomes for degradation. Binds phosphatidylinositol 3-phosphate (PtdIns3P). The protein is WD repeat domain phosphoinositide-interacting protein 4 (wdr45) of Danio rerio (Zebrafish).